Here is a 67-residue protein sequence, read N- to C-terminus: UPF0434 protein Patl_1782 (67 aa).

This sequence belongs to the UPF0434 family.

The chain is UPF0434 protein Patl_1782 from Pseudoalteromonas atlantica (strain T6c / ATCC BAA-1087).